A 293-amino-acid chain; its full sequence is NAD-dependent protein deacetylase (293 aa).

Positions Met-1–Thr-284 constitute a Deacetylase sirtuin-type domain. Residues Gly-27–Lys-47 and Gln-105–Asp-108 each bind NAD(+). His-123 serves as the catalytic Proton acceptor. Residues Cys-131, Cys-134, Cys-182, and Cys-185 each contribute to the Zn(2+) site. NAD(+) contacts are provided by residues Gly-222 to Ser-224, Asn-248 to Gly-250, and Cys-266.

It belongs to the sirtuin family. Class II subfamily. The cofactor is Zn(2+).

Its subcellular location is the cytoplasm. It catalyses the reaction N(6)-acetyl-L-lysyl-[protein] + NAD(+) + H2O = 2''-O-acetyl-ADP-D-ribose + nicotinamide + L-lysyl-[protein]. Its function is as follows. NAD-dependent protein deacetylase which modulates the activities of several enzymes which are inactive in their acetylated form. This is NAD-dependent protein deacetylase from Xanthomonas campestris pv. campestris (strain B100).